A 473-amino-acid chain; its full sequence is 3-oxoacyl-[acyl-carrier-protein] synthase I, chloroplastic (473 aa).

Polar residues predominate over residues 1-10; the sequence is MQALQSSSLR. The interval 1-26 is disordered; it reads MQALQSSSLRASPPNPLRLPSNRQSH. Residues 1-46 constitute a chloroplast transit peptide; it reads MQALQSSSLRASPPNPLRLPSNRQSHQLITNARPLRRQQRSFISAS. Residues 60–470 enclose the Ketosynthase family 3 (KS3) domain; it reads KKRVVITGMG…GHNSVVAFSA (411 aa). Catalysis depends on for beta-ketoacyl synthase activity residues cysteine 224, histidine 364, and histidine 400.

It belongs to the thiolase-like superfamily. Beta-ketoacyl-ACP synthases family. In terms of assembly, homodimer.

Its subcellular location is the plastid. The protein localises to the chloroplast stroma. The enzyme catalyses a fatty acyl-[ACP] + malonyl-[ACP] + H(+) = a 3-oxoacyl-[ACP] + holo-[ACP] + CO2. Catalyzes the condensation reaction of fatty acid synthesis by the addition to an acyl acceptor of two carbons from malonyl-ACP. Specific for elongation from C-10 to unsaturated C-16 and C-18 fatty acids. The protein is 3-oxoacyl-[acyl-carrier-protein] synthase I, chloroplastic (KAS1) of Arabidopsis thaliana (Mouse-ear cress).